A 229-amino-acid chain; its full sequence is Uracil-DNA glycosylase (229 aa).

D64 (proton acceptor) is an active-site residue.

Belongs to the uracil-DNA glycosylase (UDG) superfamily. UNG family.

The protein resides in the cytoplasm. The catalysed reaction is Hydrolyzes single-stranded DNA or mismatched double-stranded DNA and polynucleotides, releasing free uracil.. Excises uracil residues from the DNA which can arise as a result of misincorporation of dUMP residues by DNA polymerase or due to deamination of cytosine. This chain is Uracil-DNA glycosylase, found in Geobacillus thermodenitrificans (strain NG80-2).